A 415-amino-acid chain; its full sequence is Tyrosine--tRNA ligase (415 aa).

Positions 54–63 (PTGRDIHLGH) match the 'HIGH' region motif. Positions 248–252 (KMSKS) match the 'KMSKS' region motif. K251 provides a ligand contact to ATP. The S4 RNA-binding domain occupies 351–415 (AKAFYLLSAI…GKKTFRRLTR (65 aa)).

The protein belongs to the class-I aminoacyl-tRNA synthetase family. TyrS type 2 subfamily. Homodimer.

Its subcellular location is the cytoplasm. It carries out the reaction tRNA(Tyr) + L-tyrosine + ATP = L-tyrosyl-tRNA(Tyr) + AMP + diphosphate + H(+). In terms of biological role, catalyzes the attachment of tyrosine to tRNA(Tyr) in a two-step reaction: tyrosine is first activated by ATP to form Tyr-AMP and then transferred to the acceptor end of tRNA(Tyr). The sequence is that of Tyrosine--tRNA ligase from Prochlorococcus marinus (strain MIT 9313).